The sequence spans 813 residues: MPGGMGFPSDPALLPRVQAHIRKFPGTKYFKPELVAYDLQQEHPEYQRKNHKVFMGMVREALERIQLVAKEENDEKMEEKEAMDDVQEIPIVKALETRKRKAPAAGRKSTGQAAAAKEVVLSDDSEDERAARQLEKQIESLKTNRANKTVLNLYTKKSAPSTPVSTPKNQATKKPPGASAAPPALPRGLGAVSDTISPRESHVKFEHIGGADRQFLEVCRLAMHLKRPKTFATLGVDPPRGFIVHGPPGCGKTMFAQAVAGELAIPMLQLAATELVSGVSGETEEKIRRLFDTAKQNSPCILILDDIDAIAPRRETAQREMERRVVSQLCSSLDELVLPPREKPLKDQLTFGDDGSVAIIGDSPTAAGAGVLVIGTTSRPDAVDGGLRRAGRFENEISLGIPDETAREKILEKICKVNLAGDVTLKQIAKLTPGYVGADLQALIREAAKVAIDRVFDTIVVKNEGHKNLTVEQIKEELDRVLAWLQGDDDPSALSELNGGLQISFEDFERALSTIQPAAKREGFATVPDVSWDDIGALVEVRKQLEWSILYPIKRADDFAALGIDCRPQGILLCGPPGCGKTLLAKAVANETGMNFISVKGPELLNMYVGESERAVRTVFQRARDSQPCVIFFDEIDALVPKRSHGESSGGARLVNQLLTEMDGVEGRQKVFLIGATNRPDIVDAAILRPGRLDKILFVDFPSVEDRVDILRKSTKNGTRPMLGEDIDFHEIAQLPELAGFTGADLAALIHESSLLALQARVLENDESVKGVGMRHFREAASRIRPSVTEADRKKYEHMKKIYGLKQATPPSV.

2 coiled-coil regions span residues valine 58–isoleucine 89 and serine 122–asparagine 152. Disordered regions lie at residues threonine 97–alanine 131 and asparagine 152–serine 193. Polar residues predominate over residues serine 158–threonine 172. Over residues proline 175–alanine 191 the composition is skewed to low complexity. ATP contacts are provided by residues glycine 246–threonine 253 and glycine 575–threonine 582.

It belongs to the AAA ATPase family. In terms of assembly, found in a complex composed of ced-3, ced-4 and mac-1 or of ced-9, ced-4 and mac-1. Within the complex, interacts with ced-4.

In terms of biological role, probably together with ced-9, plays a modest role in preventing ced-4 and caspase ced-3-mediated apoptosis. The sequence is that of Protein mac-1 from Caenorhabditis elegans.